The following is a 321-amino-acid chain: Methyltransferase cfoB (321 aa).

Belongs to the methyltransferase superfamily.

It functions in the pathway secondary metabolite biosynthesis; flavonoid biosynthesis. Methyltransferase; part of the gene cluster that mediates the biosynthesis of chlorflavonin, a fungal flavonoid with acetolactate synthase inhibitory activity. Within the pathway, cfoB is responsible for the methylation at position C7-OH of flavonoid. The pathway begins with the PKS-NRPS hybrid synthetase cfoA that uses benzoic acid or p-hydroxybenzoic acid as a starter unit with four rounds of chain elongation using malonyl-CoA to form the chalcone skeleton. Then, a new type of chalcone isomerase, cfoK, catalyzes the conversion of the chalcone into a flavanone by a histidine-mediated oxa-Michael addition mechanism. The desaturation of flavanone to flavone is catalyzed by a new type of flavone synthase, the flavin mononucleotide (FMN)-dependent oxidoreductase cfoJ. Monooxygenases cfoF, cfoG, and P450 cfoH are responsible for the hydroxylation of the flavonoid skeleton at sites C3, C8, and C2', respectively. Like cfoF, the dehydratase cfoI also plays a role in the hydroxylation of position C3. Methyltransferases cfoB, cfoC, and cfoD then catalyze the methylation of C7-OH, C8-OH, and C3-OH, respectively. Finally, the monooxygenase cfoE is responsible for the chlorination of flavonoid at position C3'. The chain is Methyltransferase cfoB from Aspergillus candidus.